Reading from the N-terminus, the 1962-residue chain is MALMSNKTAIESILGNFEKKHVDAIYNAAAQTILSHSEFRNKHFAYSLNSYQKKIASKVGIELYPNGYLPHSHPLSKIFENHLLFDVLPGVVNTSRLVMCSIKESKVLVFKGIRDKSRRQVSDLNALNSLNNSHTSFINRLVASKDVSRYTEEADAFFQSKKGSPELFSRNFIKSLENKEAVFFHDEVHHWTKAQMFSFLKSTKVKRFIFTVVYPPEILKKFANSQNPKVYDFKVDKGRLFFFPDGVKTEAYEQKLNMEWLFSASHLRSGDCVWTVTRHKSIYAHHLFEISIGELVTDSKLFFSDYNSIDMSKIFLDRFRSYEVFPISIEHLYKVYSYLLCLKKPDLESGLAKLRQIIGDDVEIKEFLFFEQFCKRLIERQTSWGLFGHSFFEKLTDMALSSLPNSIARIFPQWKKKNTFEFLFSLGTLVVDVERKVCFEHVLEEWGFEVVITDENAYLDPLSIFAINENFNEDRVDDGYLERIRLPFWNLNDYDLKRKRVNAYNILSYRFEEERKIESAQKGPNKMLQIEWYGIKEFKVDPFISNSITEFTLLEALLGKRIDPKKYSYSKQACTLSNYLTFLCAEGLDGFNLEEHLERRLKAAGHDVSDDEEEELTSAEQAGPIKILADPLGFMKECLEEIPIETEPSLEERGQFSTDYHSEKFEINYNDIFNPHNCMNTHGDEIPTPSDGNCFFSAFTETFEVERPDTLRSDFSDWLMEFNGGSYASLAEMIRPNGVFMEAELIYLFCVFRGVTLIIHDRTHEKENVYAVHRGFEEGHMVHRGNHFVGIETYNISTLTSDPLLGDIPCGFSEEITKFHFRPDHFNCAQFRGRKAAFITKVDADYGHNGMVYPHNSWVPSLEEIIQICGQGDDFNCALINFYEANSSLGFHRDNERVYNDDPILTVCTFGEGRFTIEFKDQVTSFLMTAGSFFLMPKGFQKKARHSVSNEMSRVSITFRKHVRRLNGSPIAIREENYKNTCLINAFSKAMKRSKQAIIAKLKTVNSPFWSRYLSEGNGGSIEDCQSACEALDVTVDLNVNGKCVVLGKGALRISMALRNNHFSVINAAQLMERTFVSHLLEKGNVNVLEGFDAMLSGDVGAAGVNKIQFAANFEFARILANSFLNMTTGICLGKALDNGEKYFLHILKDRVKQIGIDVTMVCGFAGSGKSRKLQSWLHSRKKGNFCVVSPRTNLAADWAFKLELEPNEQRKVSTFEKFIKTDKSKLDLIVIDELTLFPNGYLDLLVYELADVNRHCQIILLFDPLQARYHNKMDESILTFEHDVDRLIGGQNIEYIYSTHRMSRYFNRFFDVPCFNQADRTEEQRLWIFDDVYSIPSICSDRQEPCDVLLVESDLEKKAFSPIINVMTFGESQGLTFNHVCILLSESSAASNEFRWMVALTRARTRFSLCSTFLGGIEEFKVKRKESLITSILQGEKITFNRLNLMLKCNLIRREKENGCRDEVDREERLEGDPFLKPFIFLGQRVEKDEDEVEEVKIREPTCQTHLYITEPNFGLCYNFDFIREKEQREYREDMLVTNQFCDSYDKVHINGKRETPGPLRFKAIYPKHSADDDMTFWMAVRKRLVFREEEENYQRLSRAHLVGGLLYTNFKKKMGLEFTFDQGLLEESINAFEKKKLEKSCGTIKSHSIRSDIDWALNDVFLFMKSQLCTKYEKQFVDAKAGQTLACFQHLILVQFAPWCRYLETQIRNQLPEEIYIHSNKNFDDLNAWVKKFFQRDICVESDYEAFDASQDEYILSFEIHLMKDAHFPQKIIDAYIDLKCKLGCKLGHFSIMRFTGEFCTFLFNTLANMAFTMCRYEWRRGQPIAFAGDDMCALNNLAVCHDFDDLFELISLKAKVERTETPMFCGWRLTPYGIVKEPELVYNRFQVAIEEGKVLECLENYAIEVSYAYSLSERLYEVLKSERQVQYHQAVVRFIVTHIDKLKTKVRDLFLEQSSDEDI.

One can recognise an Alphavirus-like MT domain in the interval 64 to 261; that stretch reads YPNGYLPHSH…YEQKLNMEWL (198 aa). The 112-residue stretch at 683–794 folds into the OTU domain; the sequence is GDEIPTPSDG…GNHFVGIETY (112 aa). The 90-residue stretch at 874–963 folds into the Fe2OG dioxygenase domain; the sequence is DFNCALINFY…RVSITFRKHV (90 aa). Positions 892, 894, and 946 each coordinate Fe cation. Position 954 (Arg954) interacts with 2-oxoglutarate. The Peptidase C23 domain maps to 978–1067; that stretch reads YKNTCLINAF…LRNNHFSVIN (90 aa). Residues Cys982 and His1062 contribute to the active site. One can recognise a (+)RNA virus helicase ATP-binding domain in the interval 1122 to 1297; the sequence is NSFLNMTTGI…LIGGQNIEYI (176 aa). 1164–1171 is a binding site for ATP; the sequence is GFAGSGKS. A (+)RNA virus helicase C-terminal domain is found at 1298 to 1445; the sequence is YSTHRMSRYF…GEKITFNRLN (148 aa). The 108-residue stretch at 1739–1846 folds into the RdRp catalytic domain; the sequence is DICVESDYEA…LNNLAVCHDF (108 aa).

The cofactor is Fe(2+). Post-translationally, specific enzymatic cleavages by the viral protease yield mature proteins.

The enzyme catalyses RNA(n) + a ribonucleoside 5'-triphosphate = RNA(n+1) + diphosphate. It catalyses the reaction ATP + H2O = ADP + phosphate + H(+). RNA replication polyprotein: RNA-directed RNA polymerase involved in viral RNA replication. In terms of biological role, protease: Thiol protease that cleaves the polyprotein. The chain is RNA replication polyprotein from Citrus (CLBV).